Reading from the N-terminus, the 77-residue chain is UPF0401 protein c0279 (77 aa).

Belongs to the UPF0401 family.

This chain is UPF0401 protein c0279, found in Escherichia coli O6:H1 (strain CFT073 / ATCC 700928 / UPEC).